A 175-amino-acid polypeptide reads, in one-letter code: Translation initiation factor IF-3 (175 aa).

This sequence belongs to the IF-3 family. Monomer.

The protein resides in the cytoplasm. Functionally, IF-3 binds to the 30S ribosomal subunit and shifts the equilibrium between 70S ribosomes and their 50S and 30S subunits in favor of the free subunits, thus enhancing the availability of 30S subunits on which protein synthesis initiation begins. The polypeptide is Translation initiation factor IF-3 (Chromobacterium violaceum (strain ATCC 12472 / DSM 30191 / JCM 1249 / CCUG 213 / NBRC 12614 / NCIMB 9131 / NCTC 9757 / MK)).